The following is a 264-amino-acid chain: 3-methyl-2-oxobutanoate hydroxymethyltransferase (264 aa).

Residues aspartate 45 and aspartate 84 each coordinate Mg(2+). Residues 45 to 46 (DS), aspartate 84, and lysine 112 contribute to the 3-methyl-2-oxobutanoate site. Glutamate 114 contacts Mg(2+). Residue glutamate 181 is the Proton acceptor of the active site.

It belongs to the PanB family. As to quaternary structure, homodecamer; pentamer of dimers. It depends on Mg(2+) as a cofactor.

It is found in the cytoplasm. The catalysed reaction is 3-methyl-2-oxobutanoate + (6R)-5,10-methylene-5,6,7,8-tetrahydrofolate + H2O = 2-dehydropantoate + (6S)-5,6,7,8-tetrahydrofolate. The protein operates within cofactor biosynthesis; (R)-pantothenate biosynthesis; (R)-pantoate from 3-methyl-2-oxobutanoate: step 1/2. Catalyzes the reversible reaction in which hydroxymethyl group from 5,10-methylenetetrahydrofolate is transferred onto alpha-ketoisovalerate to form ketopantoate. In Aeromonas salmonicida (strain A449), this protein is 3-methyl-2-oxobutanoate hydroxymethyltransferase.